A 241-amino-acid chain; its full sequence is Large ribosomal subunit protein bL25 (241 aa).

Positions 214–241 (LDAVKAGEEGSRAQQETEEASERADQGQ) are disordered.

This sequence belongs to the bacterial ribosomal protein bL25 family. CTC subfamily. In terms of assembly, part of the 50S ribosomal subunit; part of the 5S rRNA/L5/L18/L25 subcomplex. Contacts the 5S rRNA. Binds to the 5S rRNA independently of L5 and L18.

Functionally, this is one of the proteins that binds to the 5S RNA in the ribosome where it forms part of the central protuberance. This Deinococcus geothermalis (strain DSM 11300 / CIP 105573 / AG-3a) protein is Large ribosomal subunit protein bL25.